We begin with the raw amino-acid sequence, 349 residues long: Cobalt-precorrin-5B C(1)-methyltransferase (349 aa).

Belongs to the CbiD family.

The catalysed reaction is Co-precorrin-5B + S-adenosyl-L-methionine = Co-precorrin-6A + S-adenosyl-L-homocysteine. It participates in cofactor biosynthesis; adenosylcobalamin biosynthesis; cob(II)yrinate a,c-diamide from sirohydrochlorin (anaerobic route): step 6/10. In terms of biological role, catalyzes the methylation of C-1 in cobalt-precorrin-5B to form cobalt-precorrin-6A. The sequence is that of Cobalt-precorrin-5B C(1)-methyltransferase from Saccharolobus islandicus (strain L.S.2.15 / Lassen #1) (Sulfolobus islandicus).